The following is a 335-amino-acid chain: [Citrate [pro-3S]-lyase] ligase (335 aa).

The region spanning Met1 to Ser131 is the N-acetyltransferase domain.

The enzyme catalyses holo-[citrate lyase ACP] + acetate + ATP = acetyl-[citrate lyase ACP] + AMP + diphosphate. In terms of biological role, acetylation of prosthetic group (2-(5''-phosphoribosyl)-3'-dephosphocoenzyme-A) of the gamma subunit of citrate lyase. This chain is [Citrate [pro-3S]-lyase] ligase (citC), found in Haemophilus influenzae (strain ATCC 51907 / DSM 11121 / KW20 / Rd).